A 272-amino-acid chain; its full sequence is Energy-coupling factor transporter ATP-binding protein EcfA1 (272 aa).

The region spanning Ile2–Asp237 is the ABC transporter domain. Gly37–Ser44 provides a ligand contact to ATP.

The protein belongs to the ABC transporter superfamily. Energy-coupling factor EcfA family. As to quaternary structure, forms a stable energy-coupling factor (ECF) transporter complex composed of 2 membrane-embedded substrate-binding proteins (S component), 2 ATP-binding proteins (A component) and 2 transmembrane proteins (T component).

The protein resides in the cell membrane. ATP-binding (A) component of a common energy-coupling factor (ECF) ABC-transporter complex. Unlike classic ABC transporters this ECF transporter provides the energy necessary to transport a number of different substrates. This is Energy-coupling factor transporter ATP-binding protein EcfA1 from Mesomycoplasma hyopneumoniae (strain J / ATCC 25934 / NCTC 10110) (Mycoplasma hyopneumoniae).